A 141-amino-acid polypeptide reads, in one-letter code: Hemoglobin subunit alpha-1 (141 aa).

The Globin domain maps to 1–141 (VLTDAEKKEV…VATVLTSKYR (141 aa)). O2 is bound at residue histidine 58. Histidine 87 contributes to the heme b binding site.

It belongs to the globin family. As to quaternary structure, heterotetramer of two alpha chains and two beta chains. As to expression, red blood cells.

Functionally, involved in oxygen transport from the lung to the various peripheral tissues. This is Hemoglobin subunit alpha-1 from Tachyglossus aculeatus aculeatus (Southeast Australian short-beaked echidna).